The primary structure comprises 327 residues: Malate dehydrogenase (327 aa).

11–17 contacts NAD(+); it reads GAAGQIS. Substrate contacts are provided by arginine 92 and arginine 98. Residues asparagine 105, glutamine 112, and 129 to 131 contribute to the NAD(+) site; that span reads VGN. Substrate-binding residues include asparagine 131 and arginine 162. The active-site Proton acceptor is histidine 187.

The protein belongs to the LDH/MDH superfamily. MDH type 2 family.

It catalyses the reaction (S)-malate + NAD(+) = oxaloacetate + NADH + H(+). In terms of biological role, catalyzes the reversible oxidation of malate to oxaloacetate. In Saccharophagus degradans (strain 2-40 / ATCC 43961 / DSM 17024), this protein is Malate dehydrogenase.